Consider the following 479-residue polypeptide: Aspartyl/glutamyl-tRNA(Asn/Gln) amidotransferase subunit B (479 aa).

It belongs to the GatB/GatE family. GatB subfamily. Heterotrimer of A, B and C subunits.

The enzyme catalyses L-glutamyl-tRNA(Gln) + L-glutamine + ATP + H2O = L-glutaminyl-tRNA(Gln) + L-glutamate + ADP + phosphate + H(+). It catalyses the reaction L-aspartyl-tRNA(Asn) + L-glutamine + ATP + H2O = L-asparaginyl-tRNA(Asn) + L-glutamate + ADP + phosphate + 2 H(+). In terms of biological role, allows the formation of correctly charged Asn-tRNA(Asn) or Gln-tRNA(Gln) through the transamidation of misacylated Asp-tRNA(Asn) or Glu-tRNA(Gln) in organisms which lack either or both of asparaginyl-tRNA or glutaminyl-tRNA synthetases. The reaction takes place in the presence of glutamine and ATP through an activated phospho-Asp-tRNA(Asn) or phospho-Glu-tRNA(Gln). The protein is Aspartyl/glutamyl-tRNA(Asn/Gln) amidotransferase subunit B of Geotalea daltonii (strain DSM 22248 / JCM 15807 / FRC-32) (Geobacter daltonii).